Consider the following 877-residue polypeptide: MDSLITIVNKLQDAFTSLGVHMQLDLPQIAVVGGQSAGKSSVLENFVGKDFLPRGSGIVTRRPLILQLINGVTEYGEFLHIKGKKFSSFDEIRKEIEDETDRVTGSNKGISNIPINLRVYSPHVLNLTLIDLPGLTKVAIGDQPVDIEQQIKQMIFQFIRKETCLILAVTPANTDLANSDALKLAKEVDPQGVRTIGVITKLDLMDEGTDARDILENKLLPLRRGYIGVVNRSQKDIEGRKDIHQALAAERKFFLSHPSYRHMADRLGTPYLQRVLNQQLTNHIRDTLPGLRDKLQKQMLTLEKEVEEFKHFQPGDASIKTKAMLQMIQQLQSDFERTIEGSGSALVNTNELSGGAKINRIFHERLRFEIVKMACDEKELRREISFAIRNIHGIRVGLFTPDMAFEAIVKRQIALLKEPVIKCVDLVVQELSVVVRMCTAKMSRYPRLREETERIITTHVRQREHSCKEQILLLIDFELAYMNTNHEDFIGFANAQNKSENANKTGTRQLGNQVIRKGHMVIQNLGIMKGGSRPYWFVLTSESISWYKDEDEKEKKFMLPLDGLKLRDIEQGFMSMSRRVTFALFSPDGRNVYKDYKQLELSCETVEDVESWKASFLRAGVYPEKQETQENGDESASEESSSDPQLERQVETIRNLVDSYMKIVTKTTRDMVPKAIMMLIINNAKDFINGELLAHLYASGDQAQMMEESAESATRREEMLRMYRACKDALQIIGDVSMATVSSPLPPPVKNDWLPSGLDNPRLSPPSPGGVRGKPGPPAQSSLGGRNPPLPPSTGRPAPAIPNRPGGGAPPLPGGRPGGSLPPPMLPSRVSGAVGGAIVQQSGANRYVPESMRGQVNQAVGQAAINELSNAFSSRFK.

The region spanning 23 to 289 (QLDLPQIAVV…LTNHIRDTLP (267 aa)) is the Dynamin-type G domain. The G1 motif stretch occupies residues 33 to 40 (GGQSAGKS). 33 to 41 (GGQSAGKSS) provides a ligand contact to GTP. The tract at residues 59-61 (VTR) is G2 motif. A G3 motif region spans residues 131 to 134 (DLPG). The segment at 200-203 (TKLD) is G4 motif. GTP-binding positions include 200 to 206 (TKLDLMD) and 231 to 234 (NRSQ). Positions 230–233 (VNRS) are G5 motif. A PH domain is found at 513–621 (QVIRKGHMVI…WKASFLRAGV (109 aa)). 2 disordered regions span residues 623 to 648 (PEKQ…QLER) and 740 to 834 (TVSS…SGAV). A compositionally biased stretch (acidic residues) spans 630–641 (ENGDESASEESS). Positions 650–741 (VETIRNLVDS…IIGDVSMATV (92 aa)) constitute a GED domain. 3 positions are modified to phosphoserine: Ser-756, Ser-764, and Ser-767. Residues 788–826 (PPLPPSTGRPAPAIPNRPGGGAPPLPGGRPGGSLPPPML) show a composition bias toward pro residues.

Belongs to the TRAFAC class dynamin-like GTPase superfamily. Dynamin/Fzo/YdjA family.

The protein localises to the cytoplasm. The protein resides in the cytoskeleton. The enzyme catalyses GTP + H2O = GDP + phosphate + H(+). Its function is as follows. Microtubule-associated force-producing protein which is involved in the production of microtubule bundles and which is able to bind and hydrolyze GTP. Implicated in endocytic protein sorting. The sequence is that of Dynamin (shi) from Drosophila melanogaster (Fruit fly).